The following is a 1120-amino-acid chain: Vacuolar cation-chloride cotransporter 1 (1120 aa).

The interval 1 to 21 (MVSRFYQIPGTHRPSSAISSS) is disordered. The Cytoplasmic segment spans residues 1–62 (MVSRFYQIPG…YDPDNPNKDK (62 aa)). Position 34 is a phosphoserine (serine 34). The chain crosses the membrane as a helical span at residues 63–83 (LGTYDGVFVPTALNVLSILMF). The Vacuolar segment spans residues 84–85 (LR). Residues 86–106 (FGFILGQLGIICTIGLLLLSY) traverse the membrane as a helical segment. The Cytoplasmic portion of the chain corresponds to 107–145 (TINLLTTLSISAISTNGTVRGGGAYYMISRSLGPEFGGS). A helical membrane pass occupies residues 146–166 (IGLVFFLGQVFNAGMNAVGII). Residues 167–193 (EPLLYNLGYSAQGEPPAALGELLPRGH) lie on the Vacuolar side of the membrane. A helical transmembrane segment spans residues 194–214 (WHEFTYATVILFLCFSVAFVG). At 215–221 (SQTVSRA) the chain is on the cytoplasmic side. Residues 222-242 (GNILFLVLAASIFSIPLSALI) form a helical membrane-spanning segment. Residues 243 to 283 (RSPFTEGGISYTGPSWQTFHDNLLPHLTKGAAGSLLKGKET) are Vacuolar-facing. The chain crosses the membrane as a helical span at residues 284–304 (FNDLFGVFFPATAGIFAGAGM). The Cytoplasmic segment spans residues 305 to 317 (SSELRKPSKSIPK). A helical membrane pass occupies residues 318 to 338 (GTLWGLLFTFICYAVVVFSMG). Over 339–360 (CSIPRRSLYDEVQIIQTISSVQ) the chain is Vacuolar. Residues 361–381 (WVIFMGEMATSLFSIIVGMLG) traverse the membrane as a helical segment. At 382-393 (AAYVLEAIAKDN) the chain is on the cytoplasmic side. A helical transmembrane segment spans residues 394 to 414 (IIPGLEIFAHSPLYSLIFTWI). Over 415–430 (LTQLCLFSDVNKIATF) the chain is Vacuolar. The chain crosses the membrane as a helical span at residues 431–451 (ITMTFLMTFVVMNLACFLLGI). The Cytoplasmic segment spans residues 452-462 (SSAPNFRPSFK). Residues 463–482 (YFNRYTTAIGALLSVVAMLI) form a helical membrane-spanning segment. The Vacuolar segment spans residues 483–487 (VDGIS). A helical transmembrane segment spans residues 488 to 506 (ASVLFLAMILLFLFIHYFS). The Cytoplasmic segment spans residues 507–1120 (PPKSWGDVSQ…SQTMTVTTAL (614 aa)). 3 positions are modified to phosphoserine: serine 654, serine 915, and serine 918.

Belongs to the SLC12A transporter family.

It is found in the vacuole membrane. In terms of biological role, catalyzes the coordinated symport of chloride with potassium ions across the vacuolar membrane. Involved in vacuolar osmoregulation. The chain is Vacuolar cation-chloride cotransporter 1 from Saccharomyces cerevisiae (strain ATCC 204508 / S288c) (Baker's yeast).